Here is a 508-residue protein sequence, read N- to C-terminus: Lysine--tRNA ligase (508 aa).

2 residues coordinate Mg(2+): glutamate 416 and glutamate 423.

It belongs to the class-II aminoacyl-tRNA synthetase family. In terms of assembly, homodimer. It depends on Mg(2+) as a cofactor.

It localises to the cytoplasm. The catalysed reaction is tRNA(Lys) + L-lysine + ATP = L-lysyl-tRNA(Lys) + AMP + diphosphate. The sequence is that of Lysine--tRNA ligase from Prochlorococcus marinus (strain MIT 9313).